Consider the following 171-residue polypeptide: 2-vinyl bacteriochlorophyllide hydratase (171 aa).

It functions in the pathway porphyrin-containing compound metabolism; bacteriochlorophyll biosynthesis (light-independent). The protein is 2-vinyl bacteriochlorophyllide hydratase (bchF) of Rhodobacter capsulatus (strain ATCC BAA-309 / NBRC 16581 / SB1003).